The following is a 192-amino-acid chain: UPF0301 protein Bcep18194_A3962 (192 aa).

It belongs to the UPF0301 (AlgH) family.

The polypeptide is UPF0301 protein Bcep18194_A3962 (Burkholderia lata (strain ATCC 17760 / DSM 23089 / LMG 22485 / NCIMB 9086 / R18194 / 383)).